The following is an 882-amino-acid chain: Alanine--tRNA ligase (882 aa).

Zn(2+) is bound by residues His-564, His-568, Cys-666, and His-670.

The protein belongs to the class-II aminoacyl-tRNA synthetase family. Requires Zn(2+) as cofactor.

It localises to the cytoplasm. It carries out the reaction tRNA(Ala) + L-alanine + ATP = L-alanyl-tRNA(Ala) + AMP + diphosphate. Functionally, catalyzes the attachment of alanine to tRNA(Ala) in a two-step reaction: alanine is first activated by ATP to form Ala-AMP and then transferred to the acceptor end of tRNA(Ala). Also edits incorrectly charged Ser-tRNA(Ala) and Gly-tRNA(Ala) via its editing domain. This is Alanine--tRNA ligase from Rubrobacter xylanophilus (strain DSM 9941 / JCM 11954 / NBRC 16129 / PRD-1).